The sequence spans 490 residues: MKGLLSLSVLPVLAYASPMIVDSIHQNAAPILSSTNAKDIPDSYIVVFKKGVTSTSALAHQNWVQDIHTSVESKRMKKRNQFTFKNEAFDGLKHTFDFAGGFLGYSGHFDEEVIEQVRRHPDVEYIERDSEVHTLKAATENGAPWGLARISHRDKLNFGTFNKYIYASQGGEGVDAYVIDTGTNIDHVDFEGRASWGKTIPQGDDDVDGNGHGTHCSGTIAGKKYGVAKKANVYAVKVLRTSGSGTMSDVVKGVQWAAESHLKSVAEAKKGNRKGFKGSVANMSLGGGKSVTLDRVVDQAVAVGMHFAVAAGNDNADACNYSPAGSKNSITVGASTLADERAYFSNFGKCTDIFAPGLNIQSTWIGSKHAVNTISGTSMASPHICGLLAYFLSLQPASDSAFAVAEITPAEMKENMISIASKDLLSDIPSDTPNLLAWNGGGSDDYKKIIGGARENDTTEFSSTLTEKLEKLAEEGLTAIYNELKDAVVA.

An N-terminal signal peptide occupies residues 1-26 (MKGLLSLSVLPVLAYASPMIVDSIHQ). The propeptide occupies 27 to 134 (NAAPILSSTN…YIERDSEVHT (108 aa)). The region spanning 43-134 (SYIVVFKKGV…YIERDSEVHT (92 aa)) is the Inhibitor I9 domain. In terms of domain architecture, Peptidase S8 spans 144–450 (PWGLARISHR…GGSDDYKKII (307 aa)). Catalysis depends on charge relay system residues D180 and H212. N282 carries N-linked (GlcNAc...) asparagine glycosylation. The active-site Charge relay system is the S378. N-linked (GlcNAc...) asparagine glycosylation is present at N456.

Belongs to the peptidase S8 family.

It is found in the secreted. In terms of biological role, secreted subtilisin-like serine protease with keratinolytic activity that contributes to pathogenicity. In Trichophyton verrucosum (strain HKI 0517), this protein is Subtilisin-like protease 8 (SUB8).